Consider the following 116-residue polypeptide: Somatostatin (116 aa).

The first 24 residues, methionine 1 to alanine 24, serve as a signal peptide directing secretion. Positions alanine 25 to arginine 88 are excised as a propeptide. Positions proline 60–valine 82 are disordered. The span at aspartate 72–valine 82 shows a compositional bias: basic and acidic residues. A disulfide bridge links cysteine 105 with cysteine 116.

Belongs to the somatostatin family.

The protein resides in the secreted. Its function is as follows. Somatostatin inhibits the release of somatotropin. The protein is Somatostatin (SST) of Gallus gallus (Chicken).